Reading from the N-terminus, the 157-residue chain is S-ribosylhomocysteine lyase (157 aa).

3 residues coordinate Fe cation: H54, H58, and C124.

It belongs to the LuxS family. In terms of assembly, homodimer. Requires Fe cation as cofactor.

The catalysed reaction is S-(5-deoxy-D-ribos-5-yl)-L-homocysteine = (S)-4,5-dihydroxypentane-2,3-dione + L-homocysteine. Functionally, involved in the synthesis of autoinducer 2 (AI-2) which is secreted by bacteria and is used to communicate both the cell density and the metabolic potential of the environment. The regulation of gene expression in response to changes in cell density is called quorum sensing. Catalyzes the transformation of S-ribosylhomocysteine (RHC) to homocysteine (HC) and 4,5-dihydroxy-2,3-pentadione (DPD). This is S-ribosylhomocysteine lyase from Levilactobacillus brevis (strain ATCC 367 / BCRC 12310 / CIP 105137 / JCM 1170 / LMG 11437 / NCIMB 947 / NCTC 947) (Lactobacillus brevis).